The following is a 329-amino-acid chain: Chloroplast envelope quinone oxidoreductase homolog (329 aa).

Residue arginine 58 participates in substrate binding.

Belongs to the zinc-containing alcohol dehydrogenase family. Quinone oxidoreductase subfamily. As to quaternary structure, homodimer or homotetramer. Transition to monomer upon NADPH binding. Interacts with calmodulin. Interacts with HP30-1, HP30-2 and HP20.

Its subcellular location is the plastid. The protein localises to the chloroplast inner membrane. Its function is as follows. NADPH-dependent alpha,beta-unsaturated oxoene reductase reducing the double bond of medium-chain (C9) to long-chain (C18) reactive electrophile species deriving from poly-unsaturated fatty acid peroxides. The best substrates are 13-lipoxygenase-derived gamma-ketols, but is unable to reduce the double bond of short-chain alkenals and alkenones such as acrolein, crotonaldehyde, 3-buten-2-one, 4-hexen-3-one and trans-2-hexenal, or quinones such as duroquinone, decylubiquinone, coenzyme Q0, menadione, menaquinone and phylloquinone. Can use trans-2-nonenal, trans-3-decen-2-one, 4-hydroxynonenal, 12-oxo-10(E) dodecanoate (traumatin), 4-oxononenal, trans-1,3 diphenyl-2-propenone, trans-1,4-diphenyl-2-butene-1,4-dione, 9-oxo-12,13-epoxy-(10E)-octadecenoic acid (trans-EKODE-1b), 9-hydroxy-12-oxo-10(E)-octadecenoic acid, 9-Hydroxy-12-oxo-10(E),15(Z)-octadecadienoic acid and 9,13-dihydroxy-10-oxo-11-octadecenoic acid as substrates, but has no activity with 13(R,S)-hydroperoxy-9(Z),11(E)-octadecadienoic acid (13-HPOD), 9(S),12(S),13(S)-trihydroxy-10(E)-octadecenoic acid, 13-hydroxy-12-oxo-9(Z)-octadecenoic acid, 9-oxo-10(E),12(Z)-octadecadienoic acid (9-KODE), 13-oxo-9(Z),11(E)-octadecadienoic acid (13-KODE) and 12-oxo-10,15(Z)-phytodienoic acid (12-OPDA). This is Chloroplast envelope quinone oxidoreductase homolog from Arabidopsis thaliana (Mouse-ear cress).